Here is a 90-residue protein sequence, read N- to C-terminus: Defensin-like protein 178 (90 aa).

The first 23 residues, 1 to 23, serve as a signal peptide directing secretion; sequence MAKATSSLVVPIIFLVIFALVEQ. Intrachain disulfides connect Cys-27/Cys-66, Cys-36/Cys-55, Cys-39/Cys-60, and Cys-43/Cys-62.

Belongs to the DEFL family.

It is found in the secreted. The protein is Defensin-like protein 178 (LCR64) of Arabidopsis thaliana (Mouse-ear cress).